Reading from the N-terminus, the 115-residue chain is uncharacterized protein (115 aa).

Residues 1–115 (MGETWFLTPN…ARSPERTPSP (115 aa)) are disordered. Residues 7–17 (LTPNGQSSPGS) show a composition bias toward polar residues. 2 stretches are compositionally biased toward low complexity: residues 60 to 70 (ASCAPRATPRR) and 91 to 107 (SASA…WPAR).

This is an uncharacterized protein from Human adenovirus C serotype 2 (HAdV-2).